The chain runs to 152 residues: Deoxyuridine 5'-triphosphate nucleotidohydrolase (152 aa).

Residues 71-73 (RSG), N84, 88-90 (LID), and M98 contribute to the substrate site.

Belongs to the dUTPase family. The cofactor is Mg(2+).

It carries out the reaction dUTP + H2O = dUMP + diphosphate + H(+). Its pathway is pyrimidine metabolism; dUMP biosynthesis; dUMP from dCTP (dUTP route): step 2/2. This enzyme is involved in nucleotide metabolism: it produces dUMP, the immediate precursor of thymidine nucleotides and it decreases the intracellular concentration of dUTP so that uracil cannot be incorporated into DNA. This is Deoxyuridine 5'-triphosphate nucleotidohydrolase from Enterobacter sp. (strain 638).